A 206-amino-acid chain; its full sequence is Small ribosomal subunit protein uS4 (206 aa).

The S4 RNA-binding domain occupies 96–156; sequence RRLDNVVYRM…DKSKNQSRIK (61 aa).

It belongs to the universal ribosomal protein uS4 family. Part of the 30S ribosomal subunit. Contacts protein S5. The interaction surface between S4 and S5 is involved in control of translational fidelity.

In terms of biological role, one of the primary rRNA binding proteins, it binds directly to 16S rRNA where it nucleates assembly of the body of the 30S subunit. Its function is as follows. With S5 and S12 plays an important role in translational accuracy. This Buchnera aphidicola subsp. Schizaphis graminum (strain Sg) protein is Small ribosomal subunit protein uS4.